A 723-amino-acid chain; its full sequence is Zinc finger CCCH domain-containing protein 11A (723 aa).

C3H1-type zinc fingers lie at residues 2-29, 31-57, and 60-87; these read SKQGDDCYFYFYSTCNKGDNCPFRHCEA, LGNETICTLWKEGRCFRNVCRFRHMEI, and KRSEIPCFWENQPGGCQKSNCAFHHTKG. Disordered regions lie at residues 142 to 208, 223 to 256, 404 to 428, 450 to 526, and 565 to 681; these read ENSE…KQDD, KKQKEKTKKQSEGPSGVPAHPLQSRTVPVPEKEN, KRAEGERKKQRILPPSVPGKVKLEE, EKAL…VKSL, and VKPS…APLS. The span at 160-175 shows a compositional bias: acidic residues; that stretch reads ADDDEDDDDQLSEEGE. Residues 376 to 411 are a coiled coil; sequence KTFSEALAERKQRRLEEEKQKLEEFLTEKRAEGERK. The segment covering 511–522 has biased composition (polar residues); sequence PSNQSAPNSKAQ. A compositionally biased stretch (low complexity) spans 609 to 620; the sequence is KKAALTAAPALP. A compositionally biased stretch (polar residues) spans 637–649; it reads LELQLGSQADSVE. Residues 650-672 are compositionally biased toward low complexity; the sequence is QSGDSSSASASSQSVAKAQQLSS.

It is found in the nucleus speckle. Through its association with TREX complex components, may participate in the export and post-transcriptional coordination of selected mRNA transcripts. Binds RNA. In Gallus gallus (Chicken), this protein is Zinc finger CCCH domain-containing protein 11A (ZC3H11A).